A 345-amino-acid chain; its full sequence is L-threonine 3-dehydrogenase (345 aa).

Zn(2+) is bound at residue Cys39. Residues Thr41 and His44 each act as charge relay system in the active site. Zn(2+) contacts are provided by His64, Glu65, Cys94, Cys97, Cys100, and Cys108. NAD(+) contacts are provided by residues Ile176, Asp196, Arg201, 263–265, and 287–288; these read LGI and VY.

This sequence belongs to the zinc-containing alcohol dehydrogenase family. As to quaternary structure, homotetramer. The cofactor is Zn(2+).

It is found in the cytoplasm. The enzyme catalyses L-threonine + NAD(+) = (2S)-2-amino-3-oxobutanoate + NADH + H(+). It participates in amino-acid degradation; L-threonine degradation via oxydo-reductase pathway; glycine from L-threonine: step 1/2. Catalyzes the NAD(+)-dependent oxidation of L-threonine to 2-amino-3-ketobutyrate. This chain is L-threonine 3-dehydrogenase, found in Anaeromyxobacter sp. (strain K).